The primary structure comprises 229 residues: 3-dehydroquinate dehydratase (229 aa).

3-dehydroquinate contacts are provided by residues 33–35 (EWR) and Arg65. His121 serves as the catalytic Proton donor/acceptor. Lys146 acts as the Schiff-base intermediate with substrate in catalysis. The 3-dehydroquinate site is built by Arg188, Ser207, and Gln211.

The protein belongs to the type-I 3-dehydroquinase family. As to quaternary structure, homodimer.

It carries out the reaction 3-dehydroquinate = 3-dehydroshikimate + H2O. The protein operates within metabolic intermediate biosynthesis; chorismate biosynthesis; chorismate from D-erythrose 4-phosphate and phosphoenolpyruvate: step 3/7. Functionally, involved in the third step of the chorismate pathway, which leads to the biosynthesis of aromatic amino acids. Catalyzes the cis-dehydration of 3-dehydroquinate (DHQ) and introduces the first double bond of the aromatic ring to yield 3-dehydroshikimate. The chain is 3-dehydroquinate dehydratase from Lactococcus lactis subsp. cremoris (strain SK11).